Here is a 294-residue protein sequence, read N- to C-terminus: Transcription repressor OFP14 (294 aa).

Over residues 49–60 the composition is skewed to basic residues; the sequence is SFKHRRRSSKTR. Disordered stretches follow at residues 49 to 72, 96 to 129, and 141 to 185; these read SFKH…HQDS, DDQE…DDDD, and AVYD…SRST. Basic and acidic residues-rich tracts occupy residues 61 to 72 and 96 to 117; these read FSKEEPVYHQDS and DDQE…RESS. The span at 118–128 shows a compositional bias: acidic residues; sequence SDDSDDDDDDD. Over residues 164 to 185 the composition is skewed to low complexity; the sequence is SSEGRPSMETTSTSSERQSRST. The OVATE domain occupies 195 to 259; that stretch reads VLRYTDEPQE…LSAFVDLIIA (65 aa).

In terms of assembly, interacts with KNAT2 and KNAT3. As to expression, expressed in roots, rosette and cauline leaves, shoots, stems, flower buds and siliques.

The protein localises to the nucleus. Transcriptional repressor that may regulate multiple aspects of plant growth and development through the regulation of BEL1-LIKE (BLH) and KNOX TALE (KNAT) homeodomain transcription factors. The sequence is that of Transcription repressor OFP14 (OFP14) from Arabidopsis thaliana (Mouse-ear cress).